Consider the following 339-residue polypeptide: MDETVAEFIKRTILKIPMNELTTILKAWDFLSENQLQTVNFRQRKESVVQHLIHLCEEKRASISDAALLDIIYMQFHQHQKVWEVFQMSKGPGEDVDLFDMKQFKNSFKKILQRALKNVTVSFRETEENAVWIRIAWGTQYTKPNQYKPTYVVYYSQTPYAFTSSSMLRRNTPLLGQALTIASKHHQIVKMDLRSRYLDSLKAIVFKQYNQTFETHNSTTPLQERSLGLDINMDSRIIHENIVEKERVQRITQETFGDYPQPQLEFAQYKLETKFKSGLNGSILAEREEPLRCLIKFSSPHLLEALKSLAPAGIADAPLSPLLTCIPNKRMNYFKIRDK.

Phosphoserine occurs at positions 226, 235, and 282.

This sequence belongs to the CENP-N/CHL4 family. Component of the CENPA-NAC complex, at least composed of CENPA, CENPC, CENPH, CENPM, CENPN, CENPT and CENPU. The CENPA-NAC complex interacts with the CENPA-CAD complex, composed of CENPI, CENPK, CENPL, CENPO, CENPP, CENPQ, CENPR and CENPS. Interacts directly with CENPA. Identified in a centromere complex containing histones H2A, H2B and H4, and at least CENPA, CENPB, CENPC, CENPT, CENPN, HJURP, SUPT16H, SSRP1 and RSF1.

The protein localises to the nucleus. Its subcellular location is the chromosome. It localises to the centromere. It is found in the kinetochore. In terms of biological role, component of the CENPA-NAC (nucleosome-associated) complex, a complex that plays a central role in assembly of kinetochore proteins, mitotic progression and chromosome segregation. The CENPA-NAC complex recruits the CENPA-CAD (nucleosome distal) complex and may be involved in incorporation of newly synthesized CENPA into centromeres. CENPN is the first protein to bind specifically to CENPA nucleosomes and the direct binding of CENPA nucleosomes by CENPN is required for centromere assembly. Required for chromosome congression and efficiently align the chromosomes on a metaphase plate. In Homo sapiens (Human), this protein is Centromere protein N (CENPN).